The chain runs to 221 residues: Small ribosomal subunit protein eS8 (221 aa).

Disordered regions lie at residues 1–41 and 128–169; these read MGIS…LSSN and TPAA…TLDP. Positions 8–26 are enriched in basic residues; it reads MHKRRATGGKQKAWRKKRK. The segment covering 146–169 has biased composition (basic and acidic residues); sequence EETKKSNHVTRKLEKRKEGRTLDP.

This sequence belongs to the eukaryotic ribosomal protein eS8 family.

The chain is Small ribosomal subunit protein eS8 (RPS8) from Zea mays (Maize).